The following is a 267-amino-acid chain: Farnesyl diphosphate phosphatase YisP (267 aa).

It belongs to the phytoene/squalene synthase family. Monomer.

The catalysed reaction is (2E,6E)-farnesyl diphosphate + H2O = (2E,6E)-farnesol + diphosphate. Its activity is regulated as follows. Diphosphate release from FPP is inhibited by zaragozic acid. A farnesyl diphosphate (FPP) phosphatase. Involved in biofilm formation, its disruption blocks biofilm synthesis which is restored by exogenous farnesol. Releases diphosphate from FPP, was initally suggested to be a squalene synthase. Diphosphate release is higher from FPP than geranyl pyrophosphate (GPP) or geranylgeranyl pyrophosphate (GGPP). Biofilm synthesis is partially restored by exogenous squalene, beta-carotene or retinol. Required for integrity of cell membrane lipid rafts. Involved in spatial organization of membranes, required for the flotillin-like proteins FloT and FloA to function correctly. In Bacillus subtilis (strain 168), this protein is Farnesyl diphosphate phosphatase YisP (yisP).